The sequence spans 140 residues: Profilin (140 aa).

Serine 2 bears the N-acetylserine mark.

This sequence belongs to the profilin family. As to quaternary structure, occurs in many kinds of cells as a complex with monomeric actin in a 1:1 ratio.

It is found in the cytoplasm. The protein resides in the cytoskeleton. Binds to actin and affects the structure of the cytoskeleton. At high concentrations, profilin prevents the polymerization of actin, whereas it enhances it at low concentrations. By binding to PIP2, it inhibits the formation of IP3 and DG. This chain is Profilin, found in Clypeaster japonicus (Sand dollar).